We begin with the raw amino-acid sequence, 130 residues long: Con-Ins G2b (130 aa).

The first 23 residues, 1 to 23 (MTTSSYFLLVALGLLLYVRQSFS), serve as a signal peptide directing secretion. 4 disulfide bridges follow: cysteine 29-cysteine 100, cysteine 41-cysteine 103, cysteine 53-cysteine 116, and cysteine 102-cysteine 107. Position 34 is a 4-hydroxyproline; partial (proline 34). The interval 54–77 (EEEEARRGGTNDGGKKRRRASPLR) is disordered. The propeptide at 59 to 92 (RRGGTNDGGKKRRRASPLRKRRRFISMLKARAKR) is c peptide. The span at 68-77 (KKRRRASPLR) shows a compositional bias: basic residues. Residue glutamate 111 is modified to 4-carboxyglutamate; partial.

Belongs to the insulin family. As to quaternary structure, heterodimer of A and B chains; disulfide-linked. Expressed by the venom gland.

The protein resides in the secreted. Its function is as follows. This venom insulin, from a fish-hunting cone snail, facilitates prey capture by rapidly inducing hypoglycemic shock. Intraperitoneal injection of this peptide into zebrafish lowers blood glucose with the same potency than human insulin. In vivo, when applied to water, this peptide reduces overall locomotor activity of zebrafish larvae, observed as a significant decrease in the percentage of time spent swimming and movement frequency. This is Con-Ins G2b from Conus geographus (Geography cone).